The chain runs to 878 residues: Alanine--tRNA ligase (878 aa).

Zn(2+)-binding residues include histidine 567, histidine 571, cysteine 669, and histidine 673.

This sequence belongs to the class-II aminoacyl-tRNA synthetase family. Requires Zn(2+) as cofactor.

It localises to the cytoplasm. It carries out the reaction tRNA(Ala) + L-alanine + ATP = L-alanyl-tRNA(Ala) + AMP + diphosphate. Catalyzes the attachment of alanine to tRNA(Ala) in a two-step reaction: alanine is first activated by ATP to form Ala-AMP and then transferred to the acceptor end of tRNA(Ala). Also edits incorrectly charged Ser-tRNA(Ala) and Gly-tRNA(Ala) via its editing domain. The sequence is that of Alanine--tRNA ligase from Rickettsia akari (strain Hartford).